Reading from the N-terminus, the 303-residue chain is Protoheme IX farnesyltransferase (303 aa).

The next 9 membrane-spanning stretches (helical) occupy residues 17–37 (GVVMLLMVTAVAGMFLATEPA), 42–62 (LATFIPAFVGLSLAMMASAAI), 91–111 (AAITFAVLLATASMIMLYFLV), 114–134 (LTAWLTLFGFVGYAFIYTLYL), 142–162 (IVIGGIAGAIPPLLGWTAVTG), 168–188 (AWLLVLIIFVWTPPHFWALAI), 208–228 (IPFTRESVLYYTILLFICTLL), 231–251 (LTGMSDLIYLLSALILGLVFL), and 270–290 (FGYSITYLFALFTALLVDHYL).

The protein belongs to the UbiA prenyltransferase family. Protoheme IX farnesyltransferase subfamily.

It localises to the cell inner membrane. The catalysed reaction is heme b + (2E,6E)-farnesyl diphosphate + H2O = Fe(II)-heme o + diphosphate. The protein operates within porphyrin-containing compound metabolism; heme O biosynthesis; heme O from protoheme: step 1/1. Converts heme B (protoheme IX) to heme O by substitution of the vinyl group on carbon 2 of heme B porphyrin ring with a hydroxyethyl farnesyl side group. The sequence is that of Protoheme IX farnesyltransferase from Alcanivorax borkumensis (strain ATCC 700651 / DSM 11573 / NCIMB 13689 / SK2).